Reading from the N-terminus, the 400-residue chain is Nicotinate phosphoribosyltransferase (400 aa).

Position 220 is a phosphohistidine; by autocatalysis (His220).

Belongs to the NAPRTase family. Post-translationally, transiently phosphorylated on a His residue during the reaction cycle. Phosphorylation strongly increases the affinity for substrates and increases the rate of nicotinate D-ribonucleotide production. Dephosphorylation regenerates the low-affinity form of the enzyme, leading to product release.

The catalysed reaction is nicotinate + 5-phospho-alpha-D-ribose 1-diphosphate + ATP + H2O = nicotinate beta-D-ribonucleotide + ADP + phosphate + diphosphate. It participates in cofactor biosynthesis; NAD(+) biosynthesis; nicotinate D-ribonucleotide from nicotinate: step 1/1. In terms of biological role, catalyzes the synthesis of beta-nicotinate D-ribonucleotide from nicotinate and 5-phospho-D-ribose 1-phosphate at the expense of ATP. In Escherichia coli O127:H6 (strain E2348/69 / EPEC), this protein is Nicotinate phosphoribosyltransferase.